The following is a 36-amino-acid chain: Peptide POLARIS (36 aa).

This sequence belongs to the POLARIS peptide family. Mostly expressed in the embryonic root from the heart stage and in the seedling primary and lateral root tips, especially in the columella initials and lateral root cap. Also detectable in aerial parts of the seedling, sepals and leaves, principally in vascular tissues of the lamina and petiole.

Its function is as follows. Required for correct root growth and vascular development, probably by modulating both cell division rate in meristems and cell elongation in roots. Negative regulator of the ethylene signaling pathway that modulates microtubule cytoskeleton dynamics and auxin transport and homeostasis, and possibly cytokinin signaling, thus influencing root growth and lateral root development. The sequence is that of Peptide POLARIS (PLS) from Arabidopsis thaliana (Mouse-ear cress).